The following is a 309-amino-acid chain: Hydroxyacylglutathione hydrolase, mitochondrial (309 aa).

A mitochondrion-targeting transit peptide spans 1-24 (MVLGRGSLCLRSLSVLGAACARRG). N6-acetyllysine is present on K90. Zn(2+) is bound by residues H103, H105, D107, and H108. K117 carries the N6-acetyllysine modification. H159 and D183 together coordinate Zn(2+). Substrate is bound by residues 192–194 (KFY) and 222–224 (HEY). Residue H222 coordinates Zn(2+). At K230 the chain carries N6-acetyllysine; alternate. K230 is subject to N6-succinyllysine; alternate. 298-301 (RREK) is a substrate binding site.

It belongs to the metallo-beta-lactamase superfamily. Glyoxalase II family. In terms of assembly, monomer. The cofactor is Zn(2+). Strongly expressed in testis, skeletal muscle and heart. Weakly expressed in placenta, pancreas, spleen and peripheral blood leukocytes.

Its subcellular location is the mitochondrion matrix. It localises to the cytoplasm. It carries out the reaction an S-(2-hydroxyacyl)glutathione + H2O = a 2-hydroxy carboxylate + glutathione + H(+). The catalysed reaction is (R)-S-lactoylglutathione + H2O = (R)-lactate + glutathione + H(+). Its pathway is secondary metabolite metabolism; methylglyoxal degradation; (R)-lactate from methylglyoxal: step 2/2. In terms of biological role, thiolesterase that catalyzes the hydrolysis of S-D-lactoyl-glutathione to form glutathione and D-lactic acid. The protein is Hydroxyacylglutathione hydrolase, mitochondrial (Hagh) of Rattus norvegicus (Rat).